The primary structure comprises 148 residues: MKVIFLKDVKGKGKKGEIKNVPDGYANNFLLKQGLAAEATNSSMKTLDAQKRKEEKDAAAEVENAKELKETLEKLTVEVKAKSGEGGRLFGSITSKQIVDVMQKSHKIKLDKRKFEMDDAIRALGYTNVNVKLHPQVTATVKVHVSEQ.

It belongs to the bacterial ribosomal protein bL9 family.

Its function is as follows. Binds to the 23S rRNA. This is Large ribosomal subunit protein bL9 from Bacillus mycoides (strain KBAB4) (Bacillus weihenstephanensis).